A 132-amino-acid polypeptide reads, in one-letter code: Ribosome-binding factor A (132 aa).

Belongs to the RbfA family. As to quaternary structure, monomer. Binds 30S ribosomal subunits, but not 50S ribosomal subunits or 70S ribosomes.

It is found in the cytoplasm. Functionally, one of several proteins that assist in the late maturation steps of the functional core of the 30S ribosomal subunit. Associates with free 30S ribosomal subunits (but not with 30S subunits that are part of 70S ribosomes or polysomes). Required for efficient processing of 16S rRNA. May interact with the 5'-terminal helix region of 16S rRNA. The polypeptide is Ribosome-binding factor A (Prochlorococcus marinus subsp. pastoris (strain CCMP1986 / NIES-2087 / MED4)).